Consider the following 432-residue polypeptide: MGHLGALLFLLGGLGALANICEITEVDSTLVERLGQRLLPWMDRLSQEQLNPSIYVGLRLSSLQAGAKEAHYLHSLKLSYQQSLLRPASNKDDNDSEAKPSMGQLALYLLALRANCEFIGGRKGDRLVSQLKRFLEDEKRAIGHNHQGHPRTSYYQYSLGILALCVHQKRVHDSVVGKLLYAVEHKPHLLQDHVSVDTMAMAGMAFSCLELSNLNPKQRNRINLALKRVQEKILKAQTPEGYFGNVYSTPLALQLLMGSLRPSVELGTACLKAKAALQASLQHKTFQNPLMISQLLPVLNQKSYVDLISPDCQAPRALLEPALETPPQAKVPKFIDVLLKVSGISPSYRHSVSVPAGSSLEDILKNAQEHGRFRFRTQASLSGPFLTSVLGRKAGEREFWQVLRDPDTPLQQGIADYRPKDGETIELRLVGW.

Positions 1-18 (MGHLGALLFLLGGLGALA) are cleaved as a signal peptide. Disulfide bonds link Cys-21/Cys-270, Cys-116/Cys-312, and Cys-165/Cys-208. Residue Asn-94 is glycosylated (N-linked (GlcNAc...) asparagine). Cob(II)alamin is bound by residues Gln-104, 152–156 (TSYYQ), His-193, 193–197 (HVSVD), Asn-245, Ser-248, Gln-294, and 400–402 (WQV).

Belongs to the eukaryotic cobalamin transport proteins family. Interacts with CD320 (via LDL-receptor class A domains). Expressed in mammary gland, kidney, lymphatic nodes and liver.

It is found in the secreted. Functionally, primary vitamin B12-binding and transport protein. Delivers cobalamin to cells. This chain is Transcobalamin-2 (TCN2), found in Bos taurus (Bovine).